The primary structure comprises 503 residues: Maturase K (503 aa).

It belongs to the intron maturase 2 family. MatK subfamily.

Its subcellular location is the plastid. The protein localises to the chloroplast. Its function is as follows. Usually encoded in the trnK tRNA gene intron. Probably assists in splicing its own and other chloroplast group II introns. This chain is Maturase K, found in Liquidambar styraciflua (Sweetgum tree).